A 157-amino-acid chain; its full sequence is MTSNQVIIDLQLACKNLHGLPNRKMFQSWVSAIFSIYKKKIELTVRIVDIKEMHYLNWYYLKKDCPTNVLSFPFTPPLGMKSPLLGDVVLCRQIIEYESKEKNVPGRSHWAHMIIHGSLHLLGYNHIVDKEAILMQRVERNILQKCGYRTCCHVAHR.

The Zn(2+) site is built by His-116, His-120, and His-126.

This sequence belongs to the endoribonuclease YbeY family. Zn(2+) is required as a cofactor.

Its subcellular location is the cytoplasm. Functionally, single strand-specific metallo-endoribonuclease involved in late-stage 70S ribosome quality control and in maturation of the 3' terminus of the 16S rRNA. The polypeptide is Endoribonuclease YbeY (Blochmanniella pennsylvanica (strain BPEN)).